Reading from the N-terminus, the 313-residue chain is MNDQVEAFLRHLADERNLAANTIAAYRTDLDQFCDFVSARNRREWRDVSHDDILSFMLYLRERRYASSTVARRVAAVKSFFAFLTGSGAVPHDPTERIDSPKVDRDLPRALTPHQVDELLELPLRSPTPERIRDKAMLELLYATGMRVSELVALNMTDIDLVHSTVRCTGKNGRVRVLPINGSAATALEEYCDNSRSQLARGSDAPIDALFLNHRGKRLTRQGFWLILKQYAEEMGLGELTPHMLRHSFAVHMLNAGADLRAVQELLGHTSISTTQIYTHINHASSAQPVRSEPRATEVNGVINEQALVPEEK.

The Core-binding (CB) domain maps to 1 to 85; sequence MNDQVEAFLR…AVKSFFAFLT (85 aa). Positions 106-291 constitute a Tyr recombinase domain; the sequence is DLPRALTPHQ…NHASSAQPVR (186 aa). Residues Arg-147, Lys-171, His-243, Arg-246, and His-269 contribute to the active site. Tyr-278 acts as the O-(3'-phospho-DNA)-tyrosine intermediate in catalysis.

The protein belongs to the 'phage' integrase family. XerC subfamily. As to quaternary structure, forms a cyclic heterotetrameric complex composed of two molecules of XerC and two molecules of XerD.

It is found in the cytoplasm. In terms of biological role, site-specific tyrosine recombinase, which acts by catalyzing the cutting and rejoining of the recombining DNA molecules. The XerC-XerD complex is essential to convert dimers of the bacterial chromosome into monomers to permit their segregation at cell division. It also contributes to the segregational stability of plasmids. The protein is Tyrosine recombinase XerC of Roseiflexus sp. (strain RS-1).